The chain runs to 113 residues: Hydrogenase maturation factor HybF (113 aa).

Ni(2+)-binding residues include H2 and E3. The Zn(2+) site is built by C73, C76, C89, and C92.

It belongs to the HypA/HybF family. HybF subfamily.

In terms of biological role, involved in the maturation of [NiFe] hydrogenases. Required for nickel insertion into the metal center of the hydrogenase. The chain is Hydrogenase maturation factor HybF from Salmonella typhi.